Reading from the N-terminus, the 523-residue chain is Synaptotagmin-10 (523 aa).

Residues 1–55 (MSFRKEDGVSSLCQKALHIITELCFAGQVEWDKCSGIFPADRSGQGGGGTDISVS) are Vesicular-facing. Positions 13–35 (CQKALHIITELCFAGQVEWDKCS) are cysteine motif. Residues 56-76 (LLAVVVSFCGLALLVVSLFVF) form a helical membrane-spanning segment. Residues 77-523 (WKLCWPCWKS…CSSPRPPSTP (447 aa)) lie on the Cytoplasmic side of the membrane. At T136 the chain carries Phosphothreonine. 2 consecutive C2 domains span residues 231 to 352 (TCGK…TVWK) and 363 to 496 (DLGE…THWH). 11 residues coordinate Ca(2+): D262, D268, D320, F321, D322, S325, D328, D394, D400, D454, and D456.

It belongs to the synaptotagmin family. Homodimer; disulfide-linked via the cysteine motif. Can also form heterodimers with SYT3, SYT6, SYT7 and SYT9. Ca(2+) serves as cofactor. Highly expressed in the olfactory bulb.

Its subcellular location is the cytoplasmic vesicle. The protein resides in the secretory vesicle membrane. In terms of biological role, ca(2+) sensor specifically required for the Ca(2+)-dependent exocytosis of secretory vesicles containing IGF1 in neurons of the olfactory bulb. Exocytosis of IGF1 is required for sensory perception of smell. Not involved in Ca(2+)-dependent synaptic vesicle exocytosis. Acts through Ca(2+) and phospholipid binding to the C2 domain: Ca(2+) induces binding of the C2-domains to phospholipid membranes and to assembled SNARE-complexes; both actions contribute to triggering exocytosis. The polypeptide is Synaptotagmin-10 (Mus musculus (Mouse)).